Here is an 826-residue protein sequence, read N- to C-terminus: Villin-1 (826 aa).

A core region spans residues 1-734; it reads MVELSKKVTG…YDELKAELGD (734 aa). One copy of the Gelsolin-like 1 repeat lies at 27–76; it reads MEMVPVPTKSYGNFYEGDCYVLLSTRKTGSGFSYNIHYWLGKNSSQDEQG. An a 1,2-diacyl-sn-glycero-3-phospho-(1D-myo-inositol-4,5-bisphosphate)-binding site is contributed by 112 to 119; the sequence is KQGLIYKQ. The segment at 129–137 is crucial for binding an actin filament; it reads VETNTYNVQ. 138-146 serves as a coordination point for a 1,2-diacyl-sn-glycero-3-phospho-(1D-myo-inositol-4,5-bisphosphate); that stretch reads RLLHVKGKK. 5 Gelsolin-like repeats span residues 148–188, 265–309, 408–457, 528–568, and 631–672; these read VVAA…AERL, LVIQ…EEKQ, QELV…DELA, TKAF…DERE, and FLAT…SEKE. The headpiece stretch occupies residues 735–826; that stretch reads NASIGQLVSG…QNLKKEKGLF (92 aa). One can recognise an HP domain in the interval 760–826; the sequence is PTKLETFPLD…QNLKKEKGLF (67 aa). An absolutely required for activity region spans residues 820–823; it reads KKEK.

The protein belongs to the villin/gelsolin family. In terms of assembly, monomer. Homodimer. Associates with F-actin; the association with F-actin is inhibited by tropomyosin. Post-translationally, phosphorylated on tyrosine residues. The unphosphorylated form increases the initial rate of actin-nucleating activity, whereas the tyrosine-phosphorylated form inhibits actin-nucleating activity, enhances actin-bundling activity and enhances actin-severing activity by reducing high Ca(2+) requirements. The tyrosine-phosphorylated form does not regulate actin-capping activity. Tyrosine phosphorylation is essential for cell migration: tyrosine phosphorylation sites in the N-terminus half regulate actin reorganization and cell morphology, whereas tyrosine phosphorylation sites in the C-terminus half regulate cell migration. Tyrosine phosphorylation is induced by epidermal growth factor (EGF) and stimulates cell migration. In terms of tissue distribution, specifically expressed in epithelial cells. Component of brush border microvilli.

It is found in the cytoplasm. The protein resides in the cytoskeleton. Its subcellular location is the cell projection. It localises to the microvillus. The protein localises to the lamellipodium. It is found in the ruffle. The protein resides in the filopodium tip. Its subcellular location is the filopodium. Epithelial cell-specific Ca(2+)-regulated actin-modifying protein that modulates the reorganization of microvillar actin filaments. Plays a role in the actin nucleation, actin filament bundle assembly, actin filament capping and severing. Binds phosphatidylinositol 4,5-bisphosphate (PIP2) and lysophosphatidic acid (LPA); binds LPA with higher affinity than PIP2. Binding to LPA increases its phosphorylation by SRC and inhibits all actin-modifying activities. Binding to PIP2 inhibits actin-capping and -severing activities but enhances actin-bundling activity. Regulates the intestinal epithelial cell morphology, cell invasion, cell migration and apoptosis. Protects against apoptosis induced by dextran sodium sulfate (DSS) in the gastrointestinal epithelium. Appears to regulate cell death by maintaining mitochondrial integrity. Enhances hepatocyte growth factor (HGF)-induced epithelial cell motility, chemotaxis and wound repair. Its actin-bundling activity is inhibited by tropomyosin. The polypeptide is Villin-1 (VIL1) (Gallus gallus (Chicken)).